Reading from the N-terminus, the 144-residue chain is 3-hydroxyacyl-[acyl-carrier-protein] dehydratase FabZ (144 aa).

H49 is a catalytic residue.

The protein belongs to the thioester dehydratase family. FabZ subfamily.

The protein resides in the cytoplasm. It carries out the reaction a (3R)-hydroxyacyl-[ACP] = a (2E)-enoyl-[ACP] + H2O. Its function is as follows. Involved in unsaturated fatty acids biosynthesis. Catalyzes the dehydration of short chain beta-hydroxyacyl-ACPs and long chain saturated and unsaturated beta-hydroxyacyl-ACPs. This is 3-hydroxyacyl-[acyl-carrier-protein] dehydratase FabZ from Clostridium kluyveri (strain NBRC 12016).